Consider the following 359-residue polypeptide: Peptide chain release factor 1 (359 aa).

Position 235 is an N5-methylglutamine (Q235). The tract at residues 283-305 (QKAESERSASRKTQVGSGDRSER) is disordered.

Belongs to the prokaryotic/mitochondrial release factor family. Post-translationally, methylated by PrmC. Methylation increases the termination efficiency of RF1.

The protein resides in the cytoplasm. Functionally, peptide chain release factor 1 directs the termination of translation in response to the peptide chain termination codons UAG and UAA. This chain is Peptide chain release factor 1, found in Bartonella bacilliformis (strain ATCC 35685 / KC583 / Herrer 020/F12,63).